Reading from the N-terminus, the 329-residue chain is GTP 3',8-cyclase (329 aa).

In terms of domain architecture, Radical SAM core spans 1–229 (MNPVDYLRIS…ESTIKGNGPA (229 aa)). A GTP-binding site is contributed by R8. Residues C15 and C19 each contribute to the [4Fe-4S] cluster site. Position 21 (Y21) interacts with S-adenosyl-L-methionine. Residue C22 coordinates [4Fe-4S] cluster. R60 contacts GTP. G64 provides a ligand contact to S-adenosyl-L-methionine. T91 is a GTP binding site. Residue S115 coordinates S-adenosyl-L-methionine. K155 contacts GTP. Residue M189 participates in S-adenosyl-L-methionine binding. The [4Fe-4S] cluster site is built by C252 and C255. 257-259 (RMR) is a GTP binding site. C269 serves as a coordination point for [4Fe-4S] cluster.

Belongs to the radical SAM superfamily. MoaA family. In terms of assembly, monomer and homodimer. Requires [4Fe-4S] cluster as cofactor.

It carries out the reaction GTP + AH2 + S-adenosyl-L-methionine = (8S)-3',8-cyclo-7,8-dihydroguanosine 5'-triphosphate + 5'-deoxyadenosine + L-methionine + A + H(+). Its pathway is cofactor biosynthesis; molybdopterin biosynthesis. In terms of biological role, catalyzes the cyclization of GTP to (8S)-3',8-cyclo-7,8-dihydroguanosine 5'-triphosphate. This chain is GTP 3',8-cyclase, found in Rippkaea orientalis (strain PCC 8801 / RF-1) (Cyanothece sp. (strain PCC 8801)).